A 267-amino-acid chain; its full sequence is Kafirin PSK8 (267 aa).

A signal peptide spans 1–19 (TKIFALLALHALLVSGTTA).

Belongs to the zein family.

Major seed storage prolamin. The sequence is that of Kafirin PSK8 from Sorghum bicolor (Sorghum).